A 228-amino-acid chain; its full sequence is Heptaprenylglyceryl phosphate synthase (228 aa).

Position 12 (Lys12) interacts with sn-glycerol 1-phosphate. Residues Asp14 and Ser40 each coordinate Mg(2+). Sn-glycerol 1-phosphate-binding positions include 159–164 (YLEYSG), Gly189, and 209–210 (GN).

It belongs to the GGGP/HepGP synthase family. Group I subfamily. In terms of assembly, homodimer. Mg(2+) is required as a cofactor.

The enzyme catalyses sn-glycerol 1-phosphate + all-trans-heptaprenyl diphosphate = 3-heptaprenyl-sn-glycero-1-phosphate + diphosphate. Its pathway is membrane lipid metabolism; glycerophospholipid metabolism. Prenyltransferase that catalyzes in vivo the transfer of the heptaprenyl moiety of heptaprenyl pyrophosphate (HepPP; 35 carbon atoms) to the C3 hydroxyl of sn-glycerol-1-phosphate (G1P), producing heptaprenylglyceryl phosphate (HepGP). This reaction is an ether-bond-formation step in the biosynthesis of archaea-type G1P-based membrane lipids found in Bacillales. The protein is Heptaprenylglyceryl phosphate synthase of Bacillus licheniformis (strain ATCC 14580 / DSM 13 / JCM 2505 / CCUG 7422 / NBRC 12200 / NCIMB 9375 / NCTC 10341 / NRRL NRS-1264 / Gibson 46).